We begin with the raw amino-acid sequence, 317 residues long: Ribosomal RNA small subunit methyltransferase H (317 aa).

S-adenosyl-L-methionine is bound by residues 39 to 41, Asp59, Phe83, Asp104, and Gln111; that span reads GGH.

The protein belongs to the methyltransferase superfamily. RsmH family.

The protein resides in the cytoplasm. The enzyme catalyses cytidine(1402) in 16S rRNA + S-adenosyl-L-methionine = N(4)-methylcytidine(1402) in 16S rRNA + S-adenosyl-L-homocysteine + H(+). In terms of biological role, specifically methylates the N4 position of cytidine in position 1402 (C1402) of 16S rRNA. The chain is Ribosomal RNA small subunit methyltransferase H from Paraburkholderia xenovorans (strain LB400).